Consider the following 191-residue polypeptide: Somatotropin (191 aa).

H20 serves as a coordination point for Zn(2+). An intrachain disulfide couples C53 to C164. Position 173 (E173) interacts with Zn(2+). C181 and C189 form a disulfide bridge.

The protein belongs to the somatotropin/prolactin family.

It is found in the secreted. Functionally, growth hormone plays an important role in growth control and is involved in the regulation of several anabolic processes. Implicated as an osmoregulatory substance important for seawater adaptation. This chain is Somatotropin (GH), found in Chelonia mydas (Green sea-turtle).